The sequence spans 977 residues: 2-oxoglutarate dehydrogenase E1 component (977 aa).

The RPE1 insert domain occupies V77–G125.

It belongs to the alpha-ketoglutarate dehydrogenase family. In terms of assembly, homodimer. Part of the 2-oxoglutarate dehydrogenase (OGDH) complex composed of E1 (2-oxoglutarate dehydrogenase), E2 (dihydrolipoamide succinyltransferase) and E3 (dihydrolipoamide dehydrogenase); the complex contains multiple copies of the three enzymatic components (E1, E2 and E3). The cofactor is thiamine diphosphate.

The catalysed reaction is N(6)-[(R)-lipoyl]-L-lysyl-[protein] + 2-oxoglutarate + H(+) = N(6)-[(R)-S(8)-succinyldihydrolipoyl]-L-lysyl-[protein] + CO2. E1 component of the 2-oxoglutarate dehydrogenase (OGDH) complex which catalyzes the decarboxylation of 2-oxoglutarate, the first step in the conversion of 2-oxoglutarate to succinyl-CoA and CO(2). This is 2-oxoglutarate dehydrogenase E1 component (sucA) from Rickettsia felis (strain ATCC VR-1525 / URRWXCal2) (Rickettsia azadi).